Here is a 210-residue protein sequence, read N- to C-terminus: Oxygen-insensitive NADPH nitroreductase (210 aa).

150–155 (GVSLMG) lines the NADP(+) pocket.

This sequence belongs to the nitroreductase family.

Functionally, reduction of a variety of nitroaromatic compounds using NADPH as source of reducing equivalents; two electrons are transferred. Capable of reducing metronidazole; inactive RdxA renders the bacterium resistant to this compound. The reduction of metronidazole generates hydroxylamine, a potent mutagen and bactericide. This Helicobacter pylori (strain ATCC 700392 / 26695) (Campylobacter pylori) protein is Oxygen-insensitive NADPH nitroreductase (rdxA).